The primary structure comprises 128 residues: uncharacterized protein (128 aa).

3 helical membrane passes run 13-35 (FQMA…VFFV), 42-64 (IIAL…YNGG), and 90-112 (LVLT…SIIL).

The protein localises to the cell membrane. This is an uncharacterized protein from Methanocaldococcus jannaschii (strain ATCC 43067 / DSM 2661 / JAL-1 / JCM 10045 / NBRC 100440) (Methanococcus jannaschii).